The chain runs to 86 residues: Small nuclear ribonucleoprotein F (86 aa).

S2 is modified (N-acetylserine). The region spanning 6 to 78 is the Sm domain; sequence NPKPFLNGLT…VLYIRGVEEE (73 aa).

The protein belongs to the snRNP Sm proteins family. SmF/LSm6 subfamily. As to quaternary structure, core component of the spliceosomal U1, U2, U4 and U5 small nuclear ribonucleoproteins (snRNPs), the building blocks of the spliceosome. Most spliceosomal snRNPs contain a common set of Sm proteins, SNRPB, SNRPD1, SNRPD2, SNRPD3, SNRPE, SNRPF and SNRPG that assemble in a heptameric protein ring on the Sm site of the small nuclear RNA to form the core snRNP. Component of the U1 snRNP. The U1 snRNP is composed of the U1 snRNA and the 7 core Sm proteins SNRPB, SNRPD1, SNRPD2, SNRPD3, SNRPE, SNRPF and SNRPG, and at least three U1 snRNP-specific proteins SNRNP70/U1-70K, SNRPA/U1-A and SNRPC/U1-C. Component of the U4/U6-U5 tri-snRNP complex composed of the U4, U6 and U5 snRNAs and at least PRPF3, PRPF4, PRPF6, PRPF8, PRPF31, SNRNP200, TXNL4A, SNRNP40, SNRPB, SNRPD1, SNRPD2, SNRPD3, SNRPE, SNRPF, SNRPG, DDX23, CD2BP2, PPIH, SNU13, EFTUD2, SART1 and USP39, plus LSM2, LSM3, LSM4, LSM5, LSM6, LSM7 and LSM8. Component of the U7 snRNP complex, or U7 Sm protein core complex, that is composed of the U7 snRNA and at least LSM10, LSM11, SNRPB, SNRPD3, SNRPE, SNRPF and SNRPG; the complex does not contain SNRPD1 and SNRPD2. Component of the minor spliceosome, which splices U12-type introns. Part of the SMN-Sm complex that contains SMN1, GEMIN2/SIP1, DDX20/GEMIN3, GEMIN4, GEMIN5, GEMIN6, GEMIN7, GEMIN8, STRAP/UNRIP and the Sm proteins SNRPB, SNRPD1, SNRPD2, SNRPD3, SNRPE, SNRPF and SNRPG; catalyzes core snRNPs assembly. Forms a 6S pICln-Sm complex composed of CLNS1A/pICln, SNRPD1, SNRPD2, SNRPE, SNRPF and SNRPG; ring-like structure where CLNS1A/pICln mimics additional Sm proteins and which is unable to assemble into the core snRNP. Interacts with GEMIN2 (via N-terminus); the interaction is direct. Interacts with SNRPD2; the interaction is direct. Interacts with SNRPE; the interaction is direct.

It is found in the cytoplasm. The protein localises to the cytosol. The protein resides in the nucleus. Functionally, plays a role in pre-mRNA splicing as a core component of the spliceosomal U1, U2, U4 and U5 small nuclear ribonucleoproteins (snRNPs), the building blocks of the spliceosome. Component of both the pre-catalytic spliceosome B complex and activated spliceosome C complexes. As a component of the minor spliceosome, involved in the splicing of U12-type introns in pre-mRNAs. As part of the U7 snRNP it is involved in histone 3'-end processing. The protein is Small nuclear ribonucleoprotein F (SNRPF) of Homo sapiens (Human).